The sequence spans 452 residues: Packaging protein 1 (452 aa).

Residues 1–78 are disordered; that stretch reads MLPCRSTGRR…AKPPQRGSLL (78 aa). Position 173 to 180 (173 to 180) interacts with ATP; sequence GPTGCGKS. The segment at 442–452 is DNA-binding; that stretch reads RAYHVRKNKYQ.

This sequence belongs to the adenoviridae packaging protein 1 family. Homodimer. Part of a genome packaging complex composed of packaging proteins 1, 2 and 3; this complex specifically binds to the packaging sequence on the left end of viral genomic DNA and performs packaging of the viral genome. Interacts with protein 33K.

It is found in the virion. The protein resides in the host nucleus. The protein localises to the host nucleoplasm. It localises to the host nucleolus. Functionally, component of the packaging machinery which encapsidates the viral DNA into preformed capsids and transcriptional activator of the viral major late promoter (MLP). Binds, along with packaging proteins 2 and 3, to the specific packaging sequence on the left end of viral genomic DNA and displays ATPase activity thereby providing the power stroke of the packaging machinery. The activity of packaging protein IVa2 is stimulated by protein 33K which acts as a terminase. May be the protein that pumps DNA into the capsid powered by ATP hydrolysis. Specifically binds to the 5'-CG-3' nucleotides of the repeats making up the packaging sequence. Component of the DEF-A and DEF-B transcription factors that bind downstream elements of the major late promoter (MLP), and stimulate transcription from the MLP after initiation of viral DNA replication. DEF-A is a heterodimer packaging proteins 1 and 2 and DEF-B is a homodimer of packaging protein 1. The sequence is that of Packaging protein 1 from Homo sapiens (Human).